Reading from the N-terminus, the 236-residue chain is uncharacterized protein (236 aa).

An N-terminal signal peptide occupies residues 1-26; sequence MTNTWNRLALLIFAVLSLLVAGELQA.

It belongs to the periplasmic pilus chaperone family.

It localises to the periplasm. Functionally, part of the elfADCG-ycbUVF fimbrial operon, which promotes adhesion of bacteria to different abiotic surfaces. Could be required for the biogenesis of fimbriae. This is an uncharacterized protein from Escherichia coli (strain K12).